Reading from the N-terminus, the 663-residue chain is UvrABC system protein B (663 aa).

One can recognise a Helicase ATP-binding domain in the interval 31–271; the sequence is DNIEGGEKAQ…EQSISKIQAE (241 aa). Position 44-51 (44-51) interacts with ATP; it reads GATGTGKT. The Beta-hairpin signature appears at 97–120; it reads YYDYYQPEAYVPSSDTYIEKDSSV. The region spanning 435–601 is the Helicase C-terminal domain; that stretch reads QMDDLLGEIN…TIKKDIRDLI (167 aa). The UVR domain maps to 627-662; the sequence is QEAIKQLQKNMQEAAELLDFELAAQLRDLILELKAM.

The protein belongs to the UvrB family. In terms of assembly, forms a heterotetramer with UvrA during the search for lesions. Interacts with UvrC in an incision complex.

It is found in the cytoplasm. The UvrABC repair system catalyzes the recognition and processing of DNA lesions. A damage recognition complex composed of 2 UvrA and 2 UvrB subunits scans DNA for abnormalities. Upon binding of the UvrA(2)B(2) complex to a putative damaged site, the DNA wraps around one UvrB monomer. DNA wrap is dependent on ATP binding by UvrB and probably causes local melting of the DNA helix, facilitating insertion of UvrB beta-hairpin between the DNA strands. Then UvrB probes one DNA strand for the presence of a lesion. If a lesion is found the UvrA subunits dissociate and the UvrB-DNA preincision complex is formed. This complex is subsequently bound by UvrC and the second UvrB is released. If no lesion is found, the DNA wraps around the other UvrB subunit that will check the other stand for damage. The sequence is that of UvrABC system protein B from Streptococcus equi subsp. zooepidemicus (strain H70).